We begin with the raw amino-acid sequence, 240 residues long: Cysteine-rich venom protein (240 aa).

The signal sequence occupies residues 1-19 (MIAFIVLPILAAVLHQSSG). Residues 39–166 (DLHNSLRRSV…KYRYFYVCQY (128 aa)) form the SCP domain. 8 disulfides stabilise this stretch: cysteine 75-cysteine 153, cysteine 92-cysteine 167, cysteine 148-cysteine 164, cysteine 186-cysteine 193, cysteine 189-cysteine 198, cysteine 202-cysteine 235, cysteine 211-cysteine 229, and cysteine 220-cysteine 233. One can recognise a ShKT domain in the interval 202-235 (CTQENTYSNCNSLVQQSSCQDNNMKTKCPASCFC).

It belongs to the CRISP family. As to expression, expressed by the venom gland.

The protein localises to the secreted. Its function is as follows. May block ryanodine receptors (RYR). The sequence is that of Cysteine-rich venom protein from Protobothrops mucrosquamatus (Taiwan habu).